Here is a 447-residue protein sequence, read N- to C-terminus: Adenylosuccinate synthetase (447 aa).

Residues 12–18 and 40–42 each bind GTP; these read GDEGKGK and GHT. Catalysis depends on aspartate 13, which acts as the Proton acceptor. Mg(2+) is bound by residues aspartate 13 and glycine 40. Residues 13–16, 38–41, threonine 128, arginine 142, glutamine 223, threonine 238, and arginine 302 contribute to the IMP site; these read DEGK and NAGH. The active-site Proton donor is histidine 41. 298 to 304 lines the substrate pocket; the sequence is TTTGRKR. GTP is bound by residues arginine 304, 330-332, and 412-414; these read KLD and SLG.

It belongs to the adenylosuccinate synthetase family. Homodimer. It depends on Mg(2+) as a cofactor.

Its subcellular location is the cytoplasm. The enzyme catalyses IMP + L-aspartate + GTP = N(6)-(1,2-dicarboxyethyl)-AMP + GDP + phosphate + 2 H(+). It functions in the pathway purine metabolism; AMP biosynthesis via de novo pathway; AMP from IMP: step 1/2. Plays an important role in the de novo pathway of purine nucleotide biosynthesis. Catalyzes the first committed step in the biosynthesis of AMP from IMP. This is Adenylosuccinate synthetase from Trichormus variabilis (strain ATCC 29413 / PCC 7937) (Anabaena variabilis).